The primary structure comprises 253 residues: 5'-nucleotidase SurE (253 aa).

Residues D8, D9, S39, and N97 each contribute to the a divalent metal cation site.

This sequence belongs to the SurE nucleotidase family. A divalent metal cation is required as a cofactor.

It is found in the cytoplasm. It catalyses the reaction a ribonucleoside 5'-phosphate + H2O = a ribonucleoside + phosphate. Its function is as follows. Nucleotidase that shows phosphatase activity on nucleoside 5'-monophosphates. The protein is 5'-nucleotidase SurE of Aeromonas hydrophila subsp. hydrophila (strain ATCC 7966 / DSM 30187 / BCRC 13018 / CCUG 14551 / JCM 1027 / KCTC 2358 / NCIMB 9240 / NCTC 8049).